The chain runs to 930 residues: Zn(2)-C6 fungal-type transcription factor FTF1c (930 aa).

Residues 137–164 constitute a DNA-binding region (zn(2)-C6 fungal-type); sequence CIPCRRKKIRCSGEKPACEHCLRSYIPC.

It is found in the nucleus. Its function is as follows. Zn(2)-C6 fungal-type transcription factor that has a role in the establishment of the fungus within the plant and/or the progress of the disease. Regulates the expression of virulence factors such as SIX1 and SIX6. The polypeptide is Zn(2)-C6 fungal-type transcription factor FTF1c (Fusarium oxysporum f. sp. lycopersici (strain 4287 / CBS 123668 / FGSC 9935 / NRRL 34936) (Fusarium vascular wilt of tomato)).